A 417-amino-acid polypeptide reads, in one-letter code: Phosphoglycerate kinase 1 (417 aa).

Ser-2 carries the post-translational modification N-acetylserine. A phosphoserine mark is found at Ser-2 and Ser-4. Lys-6 is modified (N6-succinyllysine). The residue at position 11 (Lys-11) is an N6-acetyllysine. Residues Val-23, Asp-24, Phe-25, Asn-26, Gln-38, and Arg-39 each coordinate (2R)-3-phosphoglycerate. The interval 38–43 (QRIKAA) is mitochondrial targeting region exposed following cis-trans isomerization by PIN1 and recognized by the TOM complex for mitochondrial translocation of the protein. Lys-48 is modified (N6-acetyllysine; alternate). N6-succinyllysine; alternate is present on Lys-48. (2R)-3-phosphoglycerate is bound by residues Ser-62, His-63, Gly-65, and Arg-66. Position 75 is an N6-acetyllysine (Lys-75). Residue Tyr-76 is modified to Phosphotyrosine. An N6-acetyllysine mark is found at Lys-86 and Lys-91. Lys-97 bears the N6-acetyllysine; alternate mark. Lys-97 is modified (N6-(2-hydroxyisobutyryl)lysine; alternate). 2 residues coordinate (2R)-3-phosphoglycerate: Leu-122 and Arg-123. Position 131 is an N6-acetyllysine; alternate (Lys-131). Lys-131 is modified (N6-malonyllysine; alternate). Lys-146 is subject to N6-acetyllysine. Residues His-170 and Arg-171 each contribute to the (2R)-3-phosphoglycerate site. Lys-191 is subject to N6-succinyllysine. Residue Tyr-196 is modified to Phosphotyrosine. Lys-199 is subject to N6-acetyllysine. Ser-203 is modified (phosphoserine). Residue Gly-214 coordinates ADP. Residue Gly-214 participates in CDP binding. Residues Ala-215 and Lys-216 each contribute to the AMP site. Ala-215 lines the ATP pocket. Ala-215 is a Mg(2+) binding site. The residue at position 216 (Lys-216) is an N6-(2-hydroxyisobutyryl)lysine. Mg(2+) is bound by residues Ala-218 and Asp-219. Position 219 (Asp-219) interacts with CDP. Residue Lys-220 participates in AMP binding. Lys-220 is a binding site for ATP. Lys-220 bears the N6-(2-hydroxyisobutyryl)lysine mark. An ADP-binding site is contributed by Gly-238. Gly-238 contacts CDP. Gly-239 contacts AMP. Gly-239 is an ATP binding site. An N6-acetyllysine mark is found at Lys-267 and Lys-291. AMP is bound at residue Gly-313. Gly-313 lines the ATP pocket. Position 323 is an N6-(2-hydroxyisobutyryl)lysine (Lys-323). Residues Gly-338, Val-340, and Phe-343 each coordinate CDP. Phe-343 contacts ADP. Position 344 (Glu-344) interacts with AMP. Glu-344 is a binding site for ATP. Ser-354 carries the phosphoserine modification. At Lys-361 the chain carries N6-acetyllysine. Positions 375 and 376 each coordinate ATP. Asp-375 is a binding site for Mg(2+).

It belongs to the phosphoglycerate kinase family. As to quaternary structure, monomer. Interacts with kinase MAPK1/ERK2; the interaction is direct, occurs under hypoxic conditions, and promotes its interaction with PIN1. Interacts with peptidyl-prolyl cis-trans isomerase PIN1; the interaction is direct, occurs under hypoxic conditions, and targets the protein to the mitochondrion by promoting interactions with the TOM complex. Interacts with mitochondrial circRNA mcPGK1 (via its 2nd stem-loop); the interaction is direct and targets the protein to the mitochondrion by promoting interactions with the TOM complex. Interacts with pyruvate dehydrogenase kinase PDK1; the interaction is direct, occurs under hypoxic conditions and leads to PDK1-mediated inhibition of pyruvate dehydrogenase complex activity. Mg(2+) serves as cofactor. Phosphorylated at Ser-203 by MAPK1/ERK2 under hypoxic conditions, which promotes its mitochondrial targeting.

Its subcellular location is the cytoplasm. It localises to the cytosol. It is found in the mitochondrion matrix. It catalyses the reaction (2R)-3-phosphoglycerate + ATP = (2R)-3-phospho-glyceroyl phosphate + ADP. The enzyme catalyses L-seryl-[protein] + ATP = O-phospho-L-seryl-[protein] + ADP + H(+). The protein operates within carbohydrate degradation; glycolysis; pyruvate from D-glyceraldehyde 3-phosphate: step 2/5. Catalyzes one of the two ATP producing reactions in the glycolytic pathway via the reversible conversion of 1,3-diphosphoglycerate to 3-phosphoglycerate. Both L- and D- forms of purine and pyrimidine nucleotides can be used as substrates, but the activity is much lower on pyrimidines. In addition to its role as a glycolytic enzyme, it seems that PGK-1 acts as a polymerase alpha cofactor protein (primer recognition protein). Acts as a protein kinase when localized to the mitochondrion where it phosphorylates pyruvate dehydrogenase kinase PDK1 to inhibit pyruvate dehydrogenase complex activity and suppress the formation of acetyl-coenzyme A from pyruvate, and consequently inhibit oxidative phosphorylation and promote glycolysis. May play a role in sperm motility. This chain is Phosphoglycerate kinase 1 (Pgk1), found in Rattus norvegicus (Rat).